A 195-amino-acid polypeptide reads, in one-letter code: Thioredoxin reductase-like selenoprotein T (195 aa).

A signal peptide spans 1-19; that stretch reads MRLLLLLLVAASAVVRSDA. The cysteinyl-selenocysteine (Cys-Sec) cross-link spans 46–49; it reads CVSU. Position 49 (selenocysteine 49) is a non-standard amino acid, selenocysteine. Residues 85-103 traverse the membrane as a helical segment; it reads IASFLSVFKLVLIGLIIVG.

Belongs to the SelWTH family. Selenoprotein T subfamily. Post-translationally, may contain a selenide-sulfide bond between Cys-46 and Sec-49. This bond is speculated to serve as redox-active pair.

Its subcellular location is the endoplasmic reticulum membrane. It catalyses the reaction [thioredoxin]-dithiol + NADP(+) = [thioredoxin]-disulfide + NADPH + H(+). Selenoprotein with thioredoxin reductase-like oxidoreductase activity. Protects dopaminergic neurons against oxidative stress and cell death. Involved in ADCYAP1/PACAP-induced calcium mobilization and neuroendocrine secretion. Plays a role in fibroblast anchorage and redox regulation. In gastric smooth muscle, modulates the contraction processes through the regulation of calcium release and MYLK activation. In pancreatic islets, involved in the control of glucose homeostasis, contributes to prolonged ADCYAP1/PACAP-induced insulin secretion. The chain is Thioredoxin reductase-like selenoprotein T from Bos taurus (Bovine).